The following is a 253-amino-acid chain: Nurim homolog (253 aa).

The Nuclear portion of the chain corresponds to 1-2 (MA). The chain crosses the membrane as a helical span at residues 3 to 30 (TFAKVMLLLSSVATFGYTFFVVGKLMLF). At 31-56 (LSTPRSISKAHTWIFNLLDNKSRLET) the chain is on the perinuclear space side. A helical transmembrane segment spans residues 57-78 (AYGPIVFDTLYLIGFIFQHSFL). Residues 79–96 (KSALVKNLWRKLGLAAAE) are Nuclear-facing. Residues 97 to 113 (RTIYSLTSSICLHYLLK) form a helical membrane-spanning segment. Residues 114 to 132 (NWLPAQSIVLWQVDVDESA) lie on the Perinuclear space side of the membrane. Residues 133-161 (PLWWTFVVTHGLGWAVIFGGSLIMDLPEL) traverse the membrane as a helical segment. Residues 162–188 (LGVKQVYYDLKEYGEPVAYKSSELRNL) are Nuclear-facing. Residues 189–207 (YSHVRHPSFVGLSVILFAT) form a helical membrane-spanning segment. At 208 to 213 (NVMSLD) the chain is on the perinuclear space side. Residues 214 to 231 (RLLLASLLTVYMYVAWST) traverse the membrane as a helical segment. The Nuclear segment spans residues 232 to 253 (DDKDVAYQKQQLRNKKHELKAQ).

Belongs to the nurim family.

The protein localises to the nucleus inner membrane. The sequence is that of Nurim homolog (nrm) from Drosophila pseudoobscura pseudoobscura (Fruit fly).